Consider the following 1148-residue polypeptide: Transcription-repair-coupling factor (1148 aa).

In terms of domain architecture, Helicase ATP-binding spans 615–776 (DMCQPLAMDR…MSGMRDLSII (162 aa)). Residue 628–635 (GDVGFGKT) participates in ATP binding. A DEEH box motif is present at residues 729-732 (DEEH). A Helicase C-terminal domain is found at 798-951 (VREAILREIL…GFALATHDLE (154 aa)).

This sequence in the N-terminal section; belongs to the UvrB family. In the C-terminal section; belongs to the helicase family. RecG subfamily. In terms of assembly, monomer. Interacts with UvrA and RNAP.

Its subcellular location is the cytoplasm. Couples transcription and DNA repair by recognizing RNA polymerase (RNAP) stalled at DNA lesions. Mediates ATP-dependent release of RNAP and its truncated transcript from the DNA, and recruitment of nucleotide excision repair machinery to the damaged site. Can also dissociate RNAP that is blocked by low concentration of nucleoside triphosphates or by physical obstruction, such as bound proteins. In addition, can rescue arrested complexes by promoting forward translocation. Has ATPase activity, which is required for removal of stalled RNAP, but seems to lack helicase activity. May act through a translocase activity that rewinds upstream DNA, leading either to translocation or to release of RNAP when the enzyme active site cannot continue elongation. This is Transcription-repair-coupling factor from Escherichia coli (strain K12).